A 194-amino-acid polypeptide reads, in one-letter code: Large ribosomal subunit protein eL15 (194 aa).

Residues 165–194 (AGKKGRGLMNKGKGAEKVRPGIRANKKLGK) are disordered.

Belongs to the eukaryotic ribosomal protein eL15 family.

This Methanococcus aeolicus (strain ATCC BAA-1280 / DSM 17508 / OCM 812 / Nankai-3) protein is Large ribosomal subunit protein eL15.